We begin with the raw amino-acid sequence, 194 residues long: MDVHNVEMVMSAVSASQYPTDGKPEIALVGRSNVGKSSLTNTLIQRKNFARTSSQPGKTQTLNFYDVEDKLYFVDVPGYGYAKVSKAQREAFGVMIEEYITSRKQLRGVISLVDARHEPSEDDISMYEWLHYYNIPILVVATKSDKISRGKFNKAESVIKKALGFDNEDSDFQFFSSETKYGKDEVWHWIEQHI.

Residues 22 to 194 (GKPEIALVGR…EVWHWIEQHI (173 aa)) form the EngB-type G domain. GTP is bound by residues 30–37 (GRSNVGKS), 57–61 (GKTQT), 75–78 (DVPG), 142–145 (TKSD), and 175–177 (FSS). Mg(2+)-binding residues include S37 and T59.

It belongs to the TRAFAC class TrmE-Era-EngA-EngB-Septin-like GTPase superfamily. EngB GTPase family. Mg(2+) is required as a cofactor.

Its function is as follows. Necessary for normal cell division and for the maintenance of normal septation. The chain is Probable GTP-binding protein EngB from Leuconostoc mesenteroides subsp. mesenteroides (strain ATCC 8293 / DSM 20343 / BCRC 11652 / CCM 1803 / JCM 6124 / NCDO 523 / NBRC 100496 / NCIMB 8023 / NCTC 12954 / NRRL B-1118 / 37Y).